The sequence spans 245 residues: Rhamnogalacturonan acetylesterase (245 aa).

The N-terminal stretch at 1-17 is a signal peptide; that stretch reads MKSIALTSLSLLPSALA. The active-site Nucleophile is S26. Residues C100 and C108 are joined by a disulfide bond. Catalysis depends on residues D204 and H207. C226 and C244 are disulfide-bonded.

This sequence belongs to the 'GDSL' lipolytic enzyme family.

It localises to the secreted. It catalyses the reaction Hydrolytic cleavage of 2-O-acetyl- or 3-O-acetyl groups of alpha-D-galacturonic acid in rhamnogalacturonan I.. Its function is as follows. Plays a key role in the degradation of rhamnogalacturonan in the cell wall. Involved in degradation of pectin. The protein is Rhamnogalacturonan acetylesterase of Emericella nidulans (strain FGSC A4 / ATCC 38163 / CBS 112.46 / NRRL 194 / M139) (Aspergillus nidulans).